The primary structure comprises 50 residues: Insulin (50 aa).

3 disulfides stabilise this stretch: Cys-7/Cys-36, Cys-19/Cys-49, and Cys-35/Cys-40.

Belongs to the insulin family. Heterodimer of a B chain and an A chain linked by two disulfide bonds.

Its subcellular location is the secreted. Its function is as follows. Insulin decreases blood glucose concentration. It increases cell permeability to monosaccharides, amino acids and fatty acids. It accelerates glycolysis, the pentose phosphate cycle, and glycogen synthesis in liver. The sequence is that of Insulin (ins) from Oncorhynchus gorbuscha (Pink salmon).